Consider the following 92-residue polypeptide: Small ribosomal subunit protein uS19 (92 aa).

Belongs to the universal ribosomal protein uS19 family.

Functionally, protein S19 forms a complex with S13 that binds strongly to the 16S ribosomal RNA. In Mycoplasmopsis agalactiae (strain NCTC 10123 / CIP 59.7 / PG2) (Mycoplasma agalactiae), this protein is Small ribosomal subunit protein uS19.